A 444-amino-acid chain; its full sequence is MDDLAQLQSCSNELATAITSLASYAGSGNTQQAINNQSPFEPEEVQRAKGNILAVATKLRTLICGPTDFLQHLASQVSEILACLRWLGEFQILACIPLMGSAPIKDIADLTNVPESRLRRIIRLTATAGFLREPERDHVAHTPLSASFFSNPSLLDAAMFLSESAAPIALQMPQTAQVKEKSSSPPSNGTPCDLALPRGTEFHTACKRRPKLNRQWLAYLHHAAGLHTADDIAAVLTQLDWPKLTNGRDGSIIEYAISRVDHCHAQVGVSSWSTSIARRLAHFYPALHFTVQISDPAVAITQEEFHPRITATSRILGTRQTAAGAAVYILHLPFASSSPSAVMTELAVHLDVLRSRSGILLILTPRLLPQPGSLPDPEVEATARSRDLALGQMADEGEMEMLELLETIDTVRDSLGKLVVTSKLRSRNNLVVAVTVEYQRDLPS.

In terms of domain architecture, HTH iclR-type spans 74–144 (ASQVSEILAC…ERDHVAHTPL (71 aa)). A DNA-binding region (H-T-H motif) is located at residues 104-123 (IKDIADLTNVPESRLRRIIR).

It is found in the nucleus. In terms of biological role, transcriptional coactivator; part of the gene cluster that mediates the biosynthesis of the tetrahydroxanthone dimer neosartorin, which exhibits antibacterial activity. This Aspergillus novofumigatus (strain IBT 16806) protein is Transcriptional coactivator nsrH.